Here is a 395-residue protein sequence, read N- to C-terminus: Flap endonuclease 1 (395 aa).

The interval 1–108 (MGILGLSKLL…DELEMRRQKA (108 aa)) is N-domain. Asp-34 is a binding site for Mg(2+). Arg-74 is a DNA binding site. Mg(2+) contacts are provided by Asp-90, Glu-162, Glu-164, Asp-183, and Asp-185. Residues 126–257 (MMEKMSKRTV…QKAWEGIQRY (132 aa)) are I-domain. Glu-162 lines the DNA pocket. Gly-235 and Asp-237 together coordinate DNA. Asp-237 contributes to the Mg(2+) binding site. The segment at 340-348 (TQGRLDSFF) is interaction with PCNA.

It belongs to the XPG/RAD2 endonuclease family. FEN1 subfamily. In terms of assembly, interacts with PCNA. Three molecules of FEN1 bind to one PCNA trimer with each molecule binding to one PCNA monomer. PCNA stimulates the nuclease activity without altering cleavage specificity. Requires Mg(2+) as cofactor. Phosphorylated. Phosphorylation upon DNA damage induces relocalization to the nuclear plasma.

The protein resides in the nucleus. The protein localises to the nucleolus. Its subcellular location is the nucleoplasm. It localises to the mitochondrion. In terms of biological role, structure-specific nuclease with 5'-flap endonuclease and 5'-3' exonuclease activities involved in DNA replication and repair. During DNA replication, cleaves the 5'-overhanging flap structure that is generated by displacement synthesis when DNA polymerase encounters the 5'-end of a downstream Okazaki fragment. It enters the flap from the 5'-end and then tracks to cleave the flap base, leaving a nick for ligation. Also involved in the long patch base excision repair (LP-BER) pathway, by cleaving within the apurinic/apyrimidinic (AP) site-terminated flap. Acts as a genome stabilization factor that prevents flaps from equilibrating into structures that lead to duplications and deletions. Also possesses 5'-3' exonuclease activity on nicked or gapped double-stranded DNA, and exhibits RNase H activity. Also involved in replication and repair of rDNA and in repairing mitochondrial DNA. In Leishmania infantum, this protein is Flap endonuclease 1.